A 514-amino-acid polypeptide reads, in one-letter code: Putative thymidine phosphorylase (514 aa).

It belongs to the thymidine/pyrimidine-nucleoside phosphorylase family. Type 2 subfamily.

It carries out the reaction thymidine + phosphate = 2-deoxy-alpha-D-ribose 1-phosphate + thymine. This chain is Putative thymidine phosphorylase, found in Sphingopyxis alaskensis (strain DSM 13593 / LMG 18877 / RB2256) (Sphingomonas alaskensis).